We begin with the raw amino-acid sequence, 291 residues long: Beta-lactamase CTX-M-6 (291 aa).

An N-terminal signal peptide occupies residues 1–28; the sequence is MMTQSIRRSMLTVMATLPLLFSSATLHA. Serine 73 functions as the Acyl-ester intermediate in the catalytic mechanism. Position 237–239 (237–239) interacts with substrate; that stretch reads KTG.

The protein belongs to the class-A beta-lactamase family.

The enzyme catalyses a beta-lactam + H2O = a substituted beta-amino acid. Has cefotaxime-hydrolyzing activity. The polypeptide is Beta-lactamase CTX-M-6 (bla) (Salmonella typhimurium).